Here is a 203-residue protein sequence, read N- to C-terminus: Small ribosomal subunit protein uS4 (203 aa).

Positions 93 to 154 (RRFDNVVYRC…KSRNLDAVAD (62 aa)) constitute an S4 RNA-binding domain.

This sequence belongs to the universal ribosomal protein uS4 family. As to quaternary structure, part of the 30S ribosomal subunit. Contacts protein S5. The interaction surface between S4 and S5 is involved in control of translational fidelity.

In terms of biological role, one of the primary rRNA binding proteins, it binds directly to 16S rRNA where it nucleates assembly of the body of the 30S subunit. Functionally, with S5 and S12 plays an important role in translational accuracy. This chain is Small ribosomal subunit protein uS4, found in Chlorobaculum parvum (strain DSM 263 / NCIMB 8327) (Chlorobium vibrioforme subsp. thiosulfatophilum).